Reading from the N-terminus, the 598-residue chain is MRNKICKELNNTDIGKLVNLCGWVDRRRDHGGVIFIDLRDHSGFLQITINPDDGADLFKQAETLRNETVIMVSGIINERPKDSINTNLSTGELELKVKDLQVLNQIKNNLPFPVSIHDYENTKEELRLKYRYLDLRRGKLLENLKTRHKIIKVSREFLDNFGFTEVETPLLTKSTPEGARDFLVPARLSNGEFFALPQSPQLFKQLLMVGGLDKYYQIAKCFRDEDLRADRQPEFTQLDIEMSFVSEEEIISFNESLIKKIWKEVLNINFNNAFPRMSWQAAMDNYGTDRPDTRYEMLLKDLGGVLGDIGFNIFTKAIKAGGYIKSITVKGGNSSISNVRIKPGGDIFQVAQDAGAGGLAFIRVKGDELETIGAIKNNLSEEHIADILKITEAKDGDLILLGAGDKQIVNQSLDRVRQYIAKDLNLIDKSKWNFLWVTDFPMFERNEDENRYEALHHPFCSPKNIKSKDSDKMQKEIENSIANAYDLVLNGMELGGGSLRIHEANLQREVLKTVGLTDKEIDEKFGFLIEALEMGAPPHGGIAFGLDRITMLLIGADSIRETIAFPKNQQAKCLLTNAPSNVSESQLKELDIEITIDE.

E177 contributes to the L-aspartate binding site. Residues 201 to 204 (QLFK) are aspartate. Residue R223 participates in L-aspartate binding. Residues 223–225 (RDE) and Q232 contribute to the ATP site. H456 is a binding site for L-aspartate. E493 serves as a coordination point for ATP. R500 contacts L-aspartate. 545-548 (GLDR) is an ATP binding site.

It belongs to the class-II aminoacyl-tRNA synthetase family. Type 1 subfamily. As to quaternary structure, homodimer.

The protein localises to the cytoplasm. It carries out the reaction tRNA(Asx) + L-aspartate + ATP = L-aspartyl-tRNA(Asx) + AMP + diphosphate. Its function is as follows. Aspartyl-tRNA synthetase with relaxed tRNA specificity since it is able to aspartylate not only its cognate tRNA(Asp) but also tRNA(Asn). Reaction proceeds in two steps: L-aspartate is first activated by ATP to form Asp-AMP and then transferred to the acceptor end of tRNA(Asp/Asn). This Prochlorococcus marinus (strain MIT 9215) protein is Aspartate--tRNA(Asp/Asn) ligase.